The following is a 624-amino-acid chain: Steryl-sulfatase (624 aa).

Residues 1–22 (MPRPRPLLLAVMAATLADIILA) form the signal peptide. The Lumenal portion of the chain corresponds to 24-192 (DPAPAGPAPR…GTVFGPALRV (169 aa)). 2 residues coordinate Ca(2+): Asp-43 and Asp-44. The N-linked (GlcNAc...) asparagine glycan is linked to Asn-55. Cys-83 contributes to the Ca(2+) binding site. Residue Cys-83 is the Nucleophile of the active site. Cys-83 carries the 3-oxoalanine (Cys) modification. Residue His-144 is part of the active site. 2 disulfides stabilise this stretch: Cys-149/Cys-156 and Cys-178/Cys-250. The helical transmembrane segment at 193–216 (FAAGPLAALGASLAAMAAARWAGL) threads the bilayer. Topologically, residues 217–220 (ARVP) are cytoplasmic. Residues 221–242 (GWALAGTAAAMLAVGGPRSASC) form a helical membrane-spanning segment. Topologically, residues 243–624 (LGFRPANCFL…ATTRTQATPR (382 aa)) are lumenal. Residues Asp-350 and His-351 each contribute to the Ca(2+) site. Intrachain disulfides connect Cys-454–Cys-495 and Cys-487–Cys-493. The N-linked (GlcNAc...) asparagine glycan is linked to Asn-465. A disordered region spans residues 572-624 (GGAGGGAGAQDDSGHAHGDGSHAHDDPGHAQDRGDDDAHYGGHATTRTQATPR). Residues 583-611 (DSGHAHGDGSHAHDDPGHAQDRGDDDAHY) show a composition bias toward basic and acidic residues.

The protein belongs to the sulfatase family. Homodimer. Ca(2+) is required as a cofactor. The conversion to 3-oxoalanine (also known as C-formylglycine, FGly), of a serine or cysteine residue in prokaryotes and of a cysteine residue in eukaryotes, is critical for catalytic activity.

The protein resides in the microsome membrane. It is found in the endoplasmic reticulum membrane. It catalyses the reaction dehydroepiandrosterone 3-sulfate + H2O = 3beta-hydroxyandrost-5-en-17-one + sulfate + H(+). The enzyme catalyses estrone 3-sulfate + H2O = estrone + sulfate + H(+). Functionally, catalyzes the conversion of sulfated steroid precursors, such as dehydroepiandrosterone sulfate (DHEA-S) and estrone sulfate to the free steroid. The protein is Steryl-sulfatase (Sts) of Mus musculus (Mouse).